The chain runs to 432 residues: Glutamate-1-semialdehyde 2,1-aminomutase (432 aa).

Lys-265 carries the N6-(pyridoxal phosphate)lysine modification.

The protein belongs to the class-III pyridoxal-phosphate-dependent aminotransferase family. HemL subfamily. In terms of assembly, homodimer. Requires pyridoxal 5'-phosphate as cofactor.

The protein resides in the cytoplasm. The enzyme catalyses (S)-4-amino-5-oxopentanoate = 5-aminolevulinate. Its pathway is porphyrin-containing compound metabolism; protoporphyrin-IX biosynthesis; 5-aminolevulinate from L-glutamyl-tRNA(Glu): step 2/2. This chain is Glutamate-1-semialdehyde 2,1-aminomutase, found in Histophilus somni (strain 129Pt) (Haemophilus somnus).